The primary structure comprises 304 residues: Capsid protein (304 aa).

Basic and acidic residues-rich tracts occupy residues 1 to 24 (MGDSTKKAETAKDEGTSQERREAR) and 32 to 54 (FEGKDTSENTDGRAADADGEMSL). Residues 1-54 (MGDSTKKAETAKDEGTSQERREARPLPTAADFEGKDTSENTDGRAADADGEMSL) are disordered.

Belongs to the potexviruses coat protein family.

Its subcellular location is the virion. Its function is as follows. Required for genome encapsidation. Forms ribonucleoprotein complexes along with TGB1 helicase and viral RNA. The protein is Capsid protein of Potato virus M (strain Russian) (PVM).